Reading from the N-terminus, the 271-residue chain is Dermonecrotic toxin LhSicTox-alphaIA2bv (271 aa).

Residue His3 is part of the active site. Mg(2+) is bound by residues Glu23 and Asp25. Cystine bridges form between Cys43–Cys49 and Cys45–Cys188. Asp83 provides a ligand contact to Mg(2+).

This sequence belongs to the arthropod phospholipase D family. Class II subfamily. Requires Mg(2+) as cofactor. In terms of tissue distribution, expressed by the venom gland.

The protein localises to the secreted. The catalysed reaction is an N-(acyl)-sphingosylphosphocholine = an N-(acyl)-sphingosyl-1,3-cyclic phosphate + choline. The enzyme catalyses an N-(acyl)-sphingosylphosphoethanolamine = an N-(acyl)-sphingosyl-1,3-cyclic phosphate + ethanolamine. It catalyses the reaction a 1-acyl-sn-glycero-3-phosphocholine = a 1-acyl-sn-glycero-2,3-cyclic phosphate + choline. It carries out the reaction a 1-acyl-sn-glycero-3-phosphoethanolamine = a 1-acyl-sn-glycero-2,3-cyclic phosphate + ethanolamine. Dermonecrotic toxins cleave the phosphodiester linkage between the phosphate and headgroup of certain phospholipids (sphingolipid and lysolipid substrates), forming an alcohol (often choline) and a cyclic phosphate. This toxin acts on sphingomyelin (SM). It may also act on ceramide phosphoethanolamine (CPE), lysophosphatidylcholine (LPC) and lysophosphatidylethanolamine (LPE), but not on lysophosphatidylserine (LPS), and lysophosphatidylglycerol (LPG). It acts by transphosphatidylation, releasing exclusively cyclic phosphate products as second products. Induces dermonecrosis, hemolysis, increased vascular permeability, edema, inflammatory response, and platelet aggregation. The chain is Dermonecrotic toxin LhSicTox-alphaIA2bv from Loxosceles hirsuta (Recluse spider).